The chain runs to 174 residues: Crossover junction endodeoxyribonuclease RuvC (174 aa).

Residues D16, E76, and D148 contribute to the active site. The Mg(2+) site is built by D16, E76, and D148.

It belongs to the RuvC family. In terms of assembly, homodimer which binds Holliday junction (HJ) DNA. The HJ becomes 2-fold symmetrical on binding to RuvC with unstacked arms; it has a different conformation from HJ DNA in complex with RuvA. In the full resolvosome a probable DNA-RuvA(4)-RuvB(12)-RuvC(2) complex forms which resolves the HJ. Mg(2+) serves as cofactor.

Its subcellular location is the cytoplasm. It catalyses the reaction Endonucleolytic cleavage at a junction such as a reciprocal single-stranded crossover between two homologous DNA duplexes (Holliday junction).. The RuvA-RuvB-RuvC complex processes Holliday junction (HJ) DNA during genetic recombination and DNA repair. Endonuclease that resolves HJ intermediates. Cleaves cruciform DNA by making single-stranded nicks across the HJ at symmetrical positions within the homologous arms, yielding a 5'-phosphate and a 3'-hydroxyl group; requires a central core of homology in the junction. The consensus cleavage sequence is 5'-(A/T)TT(C/G)-3'. Cleavage occurs on the 3'-side of the TT dinucleotide at the point of strand exchange. HJ branch migration catalyzed by RuvA-RuvB allows RuvC to scan DNA until it finds its consensus sequence, where it cleaves and resolves the cruciform DNA. This is Crossover junction endodeoxyribonuclease RuvC from Rhodopseudomonas palustris (strain ATCC BAA-98 / CGA009).